We begin with the raw amino-acid sequence, 86 residues long: uncharacterized protein (86 aa).

This is an uncharacterized protein from Psittacid herpesvirus 1 (isolate Amazon parrot/-/97-0001/1997) (PsHV-1).